The following is a 265-amino-acid chain: Thiazole synthase (265 aa).

K103 (schiff-base intermediate with DXP) is an active-site residue. Residues G164, 190–191, and 212–213 each bind 1-deoxy-D-xylulose 5-phosphate; these read AG and NT.

Belongs to the ThiG family. Homotetramer. Forms heterodimers with either ThiH or ThiS.

The protein resides in the cytoplasm. It catalyses the reaction [ThiS sulfur-carrier protein]-C-terminal-Gly-aminoethanethioate + 2-iminoacetate + 1-deoxy-D-xylulose 5-phosphate = [ThiS sulfur-carrier protein]-C-terminal Gly-Gly + 2-[(2R,5Z)-2-carboxy-4-methylthiazol-5(2H)-ylidene]ethyl phosphate + 2 H2O + H(+). It functions in the pathway cofactor biosynthesis; thiamine diphosphate biosynthesis. Its function is as follows. Catalyzes the rearrangement of 1-deoxy-D-xylulose 5-phosphate (DXP) to produce the thiazole phosphate moiety of thiamine. Sulfur is provided by the thiocarboxylate moiety of the carrier protein ThiS. In vitro, sulfur can be provided by H(2)S. This chain is Thiazole synthase, found in Bordetella bronchiseptica (strain ATCC BAA-588 / NCTC 13252 / RB50) (Alcaligenes bronchisepticus).